We begin with the raw amino-acid sequence, 638 residues long: Pentatricopeptide repeat-containing protein At1g59720, chloroplastic/mitochondrial (638 aa).

The N-terminal 40 residues, 1–40, are a transit peptide targeting the chloroplast and mitochondrion; the sequence is MVVRSIIVSPPTTITYYHPMSIGLLVHPLSPHIPPASSPS. PPR repeat units lie at residues 82-112, 113-148, 150-184, 185-215, 216-246, 250-280, 288-318, 319-353, 356-390, and 392-422; these read TLFLYGKILQLSSSFSDVNYAFRVFDSIENH, SSFMWNTLIRACAHDVSRKEEAFMLYRKMLERGESS, DKHTFPFVLKACAYIFGFSEGKQVHCQIVKHGFGG, DVYVNNGLIHLYGSCGCLDLARKVFDEMPER, SLVSWNSMIDALVRFGEYDSALQLFREMQRS, DGYTMQSVLSACAGLGSLSLGTWAHAFLLRK, DVLVKNSLIEMYCKCGSLRMAEQVFQGMQKR, DLASWNAMILGFATHGRAEEAMNFFDRMVDKRENV, NSVTFVGLLIACNHRGFVNKGRQYFDMMVRDYCIE, and ALEHYGCIVDLIARAGYITEAIDMVMSMPMK. Positions 427-510 are type E motif; the sequence is IWRSLLDACC…EPGCSSIEIN (84 aa). The segment at 511 to 541 is type E(+) motif; the sequence is GISHEFFAGDTSHPQTKQIYQQLKVIDDRLR. Residues 542-638 form a type DYW motif region; that stretch reads SIGYLPDRSQ…DGSCSCLDYW (97 aa).

The protein belongs to the PPR family. PCMP-H subfamily. As to quaternary structure, interacts with ORRM1. Interacts with VAR3/OZ1.

Its subcellular location is the plastid. The protein resides in the chloroplast. The protein localises to the mitochondrion. Functionally, involved in multiple sites RNA editing events in chloroplasts. Involved in the editing of the site 2 of ndhB (ndhB-2) and site 3 of ndhD (ndhD-3) transcripts, which are two plastid-encoded subunits of the chloroplast NAD(P)H dehydrogenase (NDH) complex. Required for the activity of the NDH complex of the photosynthetic electron transport chain. The chain is Pentatricopeptide repeat-containing protein At1g59720, chloroplastic/mitochondrial (PCMP-H51) from Arabidopsis thaliana (Mouse-ear cress).